Consider the following 74-residue polypeptide: Protein SlyX homolog (74 aa).

It belongs to the SlyX family.

The polypeptide is Protein SlyX homolog (Neisseria meningitidis serogroup C (strain 053442)).